The sequence spans 86 residues: Cell division topological specificity factor (86 aa).

It belongs to the MinE family.

Its function is as follows. Prevents the cell division inhibition by proteins MinC and MinD at internal division sites while permitting inhibition at polar sites. This ensures cell division at the proper site by restricting the formation of a division septum at the midpoint of the long axis of the cell. The polypeptide is Cell division topological specificity factor (Aliivibrio salmonicida (strain LFI1238) (Vibrio salmonicida (strain LFI1238))).